Consider the following 296-residue polypeptide: D-alanine--D-alanine ligase (296 aa).

Positions 99 to 292 (TYRVLDGYVN…FEELVDAIIQ (194 aa)) constitute an ATP-grasp domain. ATP is bound at residue 125–176 (GFPCVIKPRKEGSSIGVHICDNSNQLYNDLSEELKKYNEMMIQRYIEGRELT). Mg(2+)-binding residues include D247, E259, and N261.

The protein belongs to the D-alanine--D-alanine ligase family. Requires Mg(2+) as cofactor. The cofactor is Mn(2+).

It is found in the cytoplasm. The catalysed reaction is 2 D-alanine + ATP = D-alanyl-D-alanine + ADP + phosphate + H(+). It participates in cell wall biogenesis; peptidoglycan biosynthesis. Its function is as follows. Cell wall formation. This Pseudothermotoga lettingae (strain ATCC BAA-301 / DSM 14385 / NBRC 107922 / TMO) (Thermotoga lettingae) protein is D-alanine--D-alanine ligase.